A 232-amino-acid chain; its full sequence is Orotate phosphoribosyltransferase (232 aa).

5-phospho-alpha-D-ribose 1-diphosphate contacts are provided by residues R107, K108, K111, and 133-141 (EDLTTDGGS). Position 137 (T137) interacts with orotate.

Belongs to the purine/pyrimidine phosphoribosyltransferase family. PyrE subfamily. Homodimer. It depends on Mg(2+) as a cofactor.

The enzyme catalyses orotidine 5'-phosphate + diphosphate = orotate + 5-phospho-alpha-D-ribose 1-diphosphate. It participates in pyrimidine metabolism; UMP biosynthesis via de novo pathway; UMP from orotate: step 1/2. Its function is as follows. Catalyzes the transfer of a ribosyl phosphate group from 5-phosphoribose 1-diphosphate to orotate, leading to the formation of orotidine monophosphate (OMP). The chain is Orotate phosphoribosyltransferase from Cereibacter sphaeroides (strain KD131 / KCTC 12085) (Rhodobacter sphaeroides).